We begin with the raw amino-acid sequence, 376 residues long: Probable inactive protein kinase At3g63330 (376 aa).

Residues 1–370 (MVERGPTVYL…VDEALQHPYF (370 aa)) enclose the Protein kinase domain.

It belongs to the protein kinase superfamily. Ser/Thr protein kinase family.

In Arabidopsis thaliana (Mouse-ear cress), this protein is Probable inactive protein kinase At3g63330.